A 256-amino-acid polypeptide reads, in one-letter code: Pimeloyl-[acyl-carrier protein] methyl ester esterase (256 aa).

The 228-residue stretch at 15-242 folds into the AB hydrolase-1 domain; the sequence is HLVLLHGWGL…AAHAPFISHP (228 aa). Substrate contacts are provided by residues Trp22, 82–83, and 143–147; these read SL and FLALQ. Catalysis depends on Ser82, which acts as the Nucleophile. Catalysis depends on residues Asp207 and His235. Residue His235 participates in substrate binding.

This sequence belongs to the AB hydrolase superfamily. Carboxylesterase BioH family. In terms of assembly, monomer.

The protein resides in the cytoplasm. It carries out the reaction 6-carboxyhexanoyl-[ACP] methyl ester + H2O = 6-carboxyhexanoyl-[ACP] + methanol + H(+). It participates in cofactor biosynthesis; biotin biosynthesis. The physiological role of BioH is to remove the methyl group introduced by BioC when the pimeloyl moiety is complete. It allows to synthesize pimeloyl-ACP via the fatty acid synthetic pathway through the hydrolysis of the ester bonds of pimeloyl-ACP esters. This chain is Pimeloyl-[acyl-carrier protein] methyl ester esterase, found in Escherichia coli O7:K1 (strain IAI39 / ExPEC).